A 130-amino-acid polypeptide reads, in one-letter code: Profilin-1 (130 aa).

The protein belongs to the profilin family. In terms of assembly, interacts with actin. Interacts with RHO1 (GTP-bound form).

The protein resides in the cytoplasm. It localises to the cytoskeleton. The protein localises to the cell projection. It is found in the phagocytic cup. Its subcellular location is the cytoplasmic vesicle. The protein resides in the phagosome. Its function is as follows. Binds to actin and affects the structure of the cytoskeleton. At high concentrations, profilin prevents the polymerization of actin, whereas it enhances it at low concentrations. By binding to PIP2, it inhibits the formation of IP3 and DG. In Entamoeba histolytica (strain ATCC 30459 / HM-1:IMSS / ABRM), this protein is Profilin-1.